Consider the following 75-residue polypeptide: Translational regulator CsrA (75 aa).

This sequence belongs to the CsrA/RsmA family. Homodimer; the beta-strands of each monomer intercalate to form a hydrophobic core, while the alpha-helices form wings that extend away from the core.

It is found in the cytoplasm. Functionally, a translational regulator that binds mRNA to regulate translation initiation and/or mRNA stability. Usually binds in the 5'-UTR at or near the Shine-Dalgarno sequence preventing ribosome-binding, thus repressing translation. Its main target seems to be the major flagellin gene, while its function is anatagonized by FliW. The sequence is that of Translational regulator CsrA from Exiguobacterium sp. (strain ATCC BAA-1283 / AT1b).